Reading from the N-terminus, the 79-residue chain is Small ribosomal subunit protein bS18B (79 aa).

The protein belongs to the bacterial ribosomal protein bS18 family. As to quaternary structure, part of the 30S ribosomal subunit. Forms a tight heterodimer with protein bS6.

Its function is as follows. Binds as a heterodimer with protein bS6 to the central domain of the 16S rRNA, where it helps stabilize the platform of the 30S subunit. In Mycolicibacterium gilvum (strain PYR-GCK) (Mycobacterium gilvum (strain PYR-GCK)), this protein is Small ribosomal subunit protein bS18B.